Consider the following 188-residue polypeptide: dCTP deaminase (188 aa).

DCTP is bound by residues 111–116 (KSTYAR), 135–137 (TLE), Gln156, Tyr170, and Gln180. Glu137 serves as the catalytic Proton donor/acceptor.

It belongs to the dCTP deaminase family. In terms of assembly, homotrimer.

It catalyses the reaction dCTP + H2O + H(+) = dUTP + NH4(+). It participates in pyrimidine metabolism; dUMP biosynthesis; dUMP from dCTP (dUTP route): step 1/2. Functionally, catalyzes the deamination of dCTP to dUTP. This is dCTP deaminase from Acidovorax sp. (strain JS42).